The primary structure comprises 490 residues: DNA-binding protein D-ETS-3 (490 aa).

2 disordered regions span residues 190-255 (TASS…SGGG) and 271-294 (SSTQ…SQLR). The span at 196 to 207 (HVEHKVRADKST) shows a compositional bias: basic and acidic residues. The span at 211-227 (ATTSSHAAAPSSSSSAS) shows a compositional bias: low complexity. A compositionally biased stretch (gly residues) spans 244–255 (GTGGGASASGGG). Residues 271–280 (SSTQSQGYSS) are compositionally biased toward low complexity. The ETS DNA-binding region spans 317–397 (IQLWQFLLEL…HGKRYAYKFD (81 aa)).

It belongs to the ETS family. As to expression, embryonic ventral nervous system, higher in the thoracic than abdominal segments.

The protein resides in the nucleus. This Drosophila melanogaster (Fruit fly) protein is DNA-binding protein D-ETS-3 (Ets65A).